The chain runs to 117 residues: Large ribosomal subunit protein bL20c (117 aa).

Belongs to the bacterial ribosomal protein bL20 family.

The protein resides in the plastid. It is found in the chloroplast. Functionally, binds directly to 23S ribosomal RNA and is necessary for the in vitro assembly process of the 50S ribosomal subunit. It is not involved in the protein synthesizing functions of that subunit. In Platanus occidentalis (Sycamore), this protein is Large ribosomal subunit protein bL20c.